Here is a 287-residue protein sequence, read N- to C-terminus: ATP synthase gamma chain (287 aa).

This sequence belongs to the ATPase gamma chain family. As to quaternary structure, F-type ATPases have 2 components, CF(1) - the catalytic core - and CF(0) - the membrane proton channel. CF(1) has five subunits: alpha(3), beta(3), gamma(1), delta(1), epsilon(1). CF(0) has three main subunits: a, b and c.

It localises to the cell inner membrane. Functionally, produces ATP from ADP in the presence of a proton gradient across the membrane. The gamma chain is believed to be important in regulating ATPase activity and the flow of protons through the CF(0) complex. The sequence is that of ATP synthase gamma chain from Photorhabdus laumondii subsp. laumondii (strain DSM 15139 / CIP 105565 / TT01) (Photorhabdus luminescens subsp. laumondii).